Here is a 324-residue protein sequence, read N- to C-terminus: Phospho-N-acetylmuramoyl-pentapeptide-transferase (324 aa).

A run of 10 helical transmembrane segments spans residues 5–25 (VMVL…PLFI), 50–70 (GTPT…TLLM), 77–97 (LSVE…LGFL), 117–137 (LIGQ…SGFS), 147–167 (LSIN…VGGS), 176–196 (LDGL…VLAW), 203–223 (IAIF…FNAH), 227–247 (VFMG…VAIL), 250–270 (LEIL…SVII), and 304–324 (VTFW…EVWI).

It belongs to the glycosyltransferase 4 family. MraY subfamily. Mg(2+) is required as a cofactor.

The protein resides in the cell membrane. It carries out the reaction UDP-N-acetyl-alpha-D-muramoyl-L-alanyl-gamma-D-glutamyl-meso-2,6-diaminopimeloyl-D-alanyl-D-alanine + di-trans,octa-cis-undecaprenyl phosphate = di-trans,octa-cis-undecaprenyl diphospho-N-acetyl-alpha-D-muramoyl-L-alanyl-D-glutamyl-meso-2,6-diaminopimeloyl-D-alanyl-D-alanine + UMP. It functions in the pathway cell wall biogenesis; peptidoglycan biosynthesis. Catalyzes the initial step of the lipid cycle reactions in the biosynthesis of the cell wall peptidoglycan: transfers peptidoglycan precursor phospho-MurNAc-pentapeptide from UDP-MurNAc-pentapeptide onto the lipid carrier undecaprenyl phosphate, yielding undecaprenyl-pyrophosphoryl-MurNAc-pentapeptide, known as lipid I. The chain is Phospho-N-acetylmuramoyl-pentapeptide-transferase from Geobacillus sp. (strain WCH70).